Consider the following 341-residue polypeptide: S-adenosylmethionine:tRNA ribosyltransferase-isomerase (341 aa).

It belongs to the QueA family. In terms of assembly, monomer.

It localises to the cytoplasm. It carries out the reaction 7-aminomethyl-7-carbaguanosine(34) in tRNA + S-adenosyl-L-methionine = epoxyqueuosine(34) in tRNA + adenine + L-methionine + 2 H(+). Its pathway is tRNA modification; tRNA-queuosine biosynthesis. Functionally, transfers and isomerizes the ribose moiety from AdoMet to the 7-aminomethyl group of 7-deazaguanine (preQ1-tRNA) to give epoxyqueuosine (oQ-tRNA). The protein is S-adenosylmethionine:tRNA ribosyltransferase-isomerase of Clostridium botulinum (strain Alaska E43 / Type E3).